The primary structure comprises 684 residues: MAGVNRSFSYSRGDDALLRDDEREISPLRSAEDGLYSTSYGDVSPLSAGVQAQNRPFDRGLVSVPEGQTLERHMTSTPGMDNLGPASVGGGISGIALGVANSHNRQSGVDAFRETDVPVRNLPAERDFNTTGSDNPYIPAPPDGDIYPSSEAVRYRDSYSSHTGLGAGAPFAEHSTPGTTPSQRSFFDSPYQGVDAGPYQRHSAYSSHDYPLVINPDDIADDGDDGFPVHPKGAADYRSNANVPGTGVAGAAAAGGFLGKFRALFKREEPSPFYDSDIGGGLGGAEKAQGGRHIIGGGSRKRGWIVGLILAAVIVAAIVGGAVGGILGHQEHDGDTSSSSSSSSSSGTGSGGSDKGDGLLDKDSDEIKALMNNKNLHKVFPGVDYTPWGVQYPLCLQYPPSQNNVTRDLAVLTQLTNTIRLYGTDCNQTEMVLEAIDRLQLTNMKLWLGVWIDTNTTTTDRQISQLYKIVENANDTSIFKGAIVGNEALYRAGSDVASAETNLIGYINDVKDHFKDKNIDLPVGTSDLGDNWNAQLVSAADFVMSNIHPFFGGVEIDDAASWTWTFWQTHDTPLTAGTNKQQIISEVGWPTGGGNDCGSDNKCQNDKQGAVAGIDELNQFLSEWVCQALDNGTEYFWFEAFDEPWKVQYNTPGQEWEDKWGLMDSARNLKPGVKIPDCGGKTIT.

The segment covering 1 to 10 has biased composition (polar residues); sequence MAGVNRSFSY. Disordered regions lie at residues 1–38, 124–143, and 157–182; these read MAGV…LYST, AERD…APPD, and DSYS…TTPS. Over 1–302 the chain is Cytoplasmic; that stretch reads MAGVNRSFSY…HIIGGGSRKR (302 aa). Positions 12–32 are enriched in basic and acidic residues; the sequence is RGDDALLRDDEREISPLRSAE. The helical; Signal-anchor for type II membrane protein transmembrane segment at 303 to 323 threads the bilayer; sequence GWIVGLILAAVIVAAIVGGAV. Over 324–684 the chain is Extracellular; it reads GGILGHQEHD…IPDCGGKTIT (361 aa). Positions 330 to 358 are disordered; it reads QEHDGDTSSSSSSSSSSGTGSGGSDKGDG. Residues 336–347 are compositionally biased toward low complexity; it reads TSSSSSSSSSSG. Asn404, Asn427, Asn455, and Asn474 each carry an N-linked (GlcNAc...) asparagine glycan. Glu487 serves as the catalytic Proton donor. Glu586 functions as the Nucleophile in the catalytic mechanism. An N-linked (GlcNAc...) asparagine glycan is attached at Asn631.

It belongs to the glycosyl hydrolase 17 family.

It localises to the cell membrane. It catalyses the reaction Hydrolysis of (1-&gt;3)-beta-D-glucosidic linkages in (1-&gt;3)-beta-D-glucans.. Functionally, glucanases play a role in cell expansion during growth, in cell-cell fusion during mating, and in spore release during sporulation. This enzyme may be involved in beta-glucan degradation. Active on laminarin and lichenan. The chain is Putative glucan endo-1,3-beta-glucosidase btgC (btgC) from Aspergillus niger (strain ATCC MYA-4892 / CBS 513.88 / FGSC A1513).